The primary structure comprises 223 residues: Voltage-dependent calcium channel gamma-1 subunit (223 aa).

Over Met-1 to Arg-10 the chain is Cytoplasmic. A helical transmembrane segment spans residues Val-11–Thr-29. Topologically, residues Asp-30 to Ala-109 are extracellular. 2 N-linked (GlcNAc...) asparagine glycosylation sites follow: Asn-43 and Asn-80. A disulfide bridge links Cys-57 with Cys-81. The helical transmembrane segment at Ala-110–Phe-130 threads the bilayer. At Arg-131–Asp-135 the chain is on the cytoplasmic side. A helical transmembrane segment spans residues Tyr-136–Ala-156. The Extracellular segment spans residues Glu-157 to Ala-180. A helical transmembrane segment spans residues Trp-181–Leu-205. Residues Pro-206–His-223 are Cytoplasmic-facing.

It belongs to the PMP-22/EMP/MP20 family. CACNG subfamily. In terms of assembly, component of a calcium channel complex consisting of a pore-forming alpha subunit (CACNA1S) and the ancillary subunits CACNB1 or CACNB2, CACNG1 and CACNA2D1. The channel complex contains alpha, beta, gamma and delta subunits in a 1:1:1:1 ratio, i.e. it contains either CACNB1 or CACNB2. In terms of processing, N-glycosylated.

It is found in the cell membrane. The protein resides in the sarcolemma. Functionally, regulatory subunit of the voltage-gated calcium channel that gives rise to L-type calcium currents in skeletal muscle. Regulates channel inactivation kinetics. The sequence is that of Voltage-dependent calcium channel gamma-1 subunit (CACNG1) from Bos taurus (Bovine).